A 504-amino-acid polypeptide reads, in one-letter code: MQCFKLASRRSLYNARVLQADNIGDKQRSPDLEAARQNTQIVVVGAGLAGLSAAQHLLSHGFRRTVILEATDRYGGRINTQRFGDTYCELGAKWVKIDGSQDSMYELLRNTEGLGKQIKQPDRATYLQDGSRINPAMVELIDTLFRQLCRGFKVSERVKTGGDLHSLDNVMNYFRTESDRIIGVSFQHPKDQLAAREIFQSLFKEFGSILGCCLEYVNIEHITKCPVQQEQRPLYVPTGLDNVVDDLIQNMDKAQLQTGKPVGQIQWTPAPMKSVGCLDGSLYNADHIICTLPLGVLKSFAGVLFRPTLPLDKMLAIRNLGFGNPLKIYLSYKKPIGRWLKGSLRPLGTLLNPSVEQQPERNWTQQVVEISQVPSSQHVLEVHVGGGYYEEIEKLPDEELLEQITGLLRRCVSSHLVPYPQELLRSNWSTSACYLGGRPYFSTNSSARDVQRLAAPLGEKSPGLLFAGDATSLRGFGTIDAARSSGIREAQRIIDYYLKSVHCG.

Low levels seen in adult heads, thorax, abdomen and ovaries, high levels in testes.

The protein resides in the cytoplasm. Functionally, has a non-vital function. In Drosophila melanogaster (Fruit fly), this protein is Protein anon-37Cs (anon-37Cs).